A 329-amino-acid chain; its full sequence is Serine/threonine-protein phosphatase PP1-alpha (329 aa).

Positions 64, 66, 92, and 124 each coordinate Mn(2+). His-125 (proton donor) is an active-site residue. The Mn(2+) site is built by His-173 and His-248. Positions 309 to 329 (GMNSGRPAVGGGRPGTTAGKK) are disordered.

Belongs to the PPP phosphatase family. PP-1 subfamily. As to quaternary structure, interacts with lab-1; the interaction is direct. Interacts with knl-1; the interaction is direct. Mn(2+) serves as cofactor.

The catalysed reaction is O-phospho-L-seryl-[protein] + H2O = L-seryl-[protein] + phosphate. It catalyses the reaction O-phospho-L-threonyl-[protein] + H2O = L-threonyl-[protein] + phosphate. Functionally, serine/threonine-protein phosphatase which antagonizes the function of air-2 in the regulation of chromosome cohesion. Dephosphorylates histone H3 at 'Ser-10'. Dephosphorylates translation initiation factor eIF2alpha. Involved in the activation of chloride channel clh-3 during cell swelling and meiotic maturation. The chain is Serine/threonine-protein phosphatase PP1-alpha (gsp-1) from Caenorhabditis briggsae.